The chain runs to 384 residues: Putative glutamate--cysteine ligase 2-2 (384 aa).

It belongs to the glutamate--cysteine ligase type 2 family. YbdK subfamily.

It carries out the reaction L-cysteine + L-glutamate + ATP = gamma-L-glutamyl-L-cysteine + ADP + phosphate + H(+). Its function is as follows. ATP-dependent carboxylate-amine ligase which exhibits weak glutamate--cysteine ligase activity. This Rubrobacter xylanophilus (strain DSM 9941 / JCM 11954 / NBRC 16129 / PRD-1) protein is Putative glutamate--cysteine ligase 2-2.